Consider the following 305-residue polypeptide: U6 small nuclear RNA (adenine-(43)-N(6))-methyltransferase (305 aa).

The S-adenosyl-L-methionine site is built by R85, G110, E133, S164, and N186. The disordered stretch occupies residues 194-217 (SPNPFGGNTRNPQRRPAPNNVRTG).

It belongs to the methyltransferase superfamily. METTL16/RlmF family.

It carries out the reaction adenosine in U6 snRNA + S-adenosyl-L-methionine = N(6)-methyladenosine in U6 snRNA + S-adenosyl-L-homocysteine + H(+). Its function is as follows. RNA N6-methyltransferase that mediates N6-methylation of adenine of U6 small nuclear RNA (U6 snRNA). The protein is U6 small nuclear RNA (adenine-(43)-N(6))-methyltransferase of Drosophila pseudoobscura pseudoobscura (Fruit fly).